Consider the following 344-residue polypeptide: Pre-mRNA polyadenylation factor fip1 (344 aa).

Disordered regions lie at residues 1–99 (MSNA…LSTA) and 230–344 (NYNT…RNRY). The span at 28–38 (VTVSNAKSPEQ) shows a compositional bias: polar residues. Residues 39–50 (ASEESDDSDIEF) are compositionally biased toward acidic residues. The span at 80–92 (QVEKTAVEVKTTE) shows a compositional bias: basic and acidic residues. Low complexity predominate over residues 243 to 258 (SGAATPNAYVNNNPSS). Polar residues predominate over residues 271 to 301 (NITSSAGMTHAQPTHNPTSSYGNGASTNYNA). Residues 302–317 (SRPPSNHPHSSNYPSS) are compositionally biased toward low complexity.

Belongs to the FIP1 family.

It is found in the nucleus. Pre-mRNA polyadenylation factor that directly interacts with poly(A) polymerase. This chain is Pre-mRNA polyadenylation factor fip1, found in Schizosaccharomyces pombe (strain 972 / ATCC 24843) (Fission yeast).